The following is a 99-amino-acid chain: Large ribosomal subunit protein bL27 (99 aa).

Residues 1-10 (MKLIFDIQLF) constitute a propeptide that is removed on maturation.

The protein belongs to the bacterial ribosomal protein bL27 family. The N-terminus is cleaved by ribosomal processing cysteine protease Prp.

This chain is Large ribosomal subunit protein bL27, found in Caldicellulosiruptor saccharolyticus (strain ATCC 43494 / DSM 8903 / Tp8T 6331).